Consider the following 358-residue polypeptide: UDP-N-acetylglucosamine--N-acetylmuramyl-(pentapeptide) pyrophosphoryl-undecaprenol N-acetylglucosamine transferase (358 aa).

UDP-N-acetyl-alpha-D-glucosamine is bound by residues 11–13, asparagine 120, arginine 161, serine 188, and glutamine 282; that span reads TGG.

Belongs to the glycosyltransferase 28 family. MurG subfamily.

It localises to the cell inner membrane. It carries out the reaction di-trans,octa-cis-undecaprenyl diphospho-N-acetyl-alpha-D-muramoyl-L-alanyl-D-glutamyl-meso-2,6-diaminopimeloyl-D-alanyl-D-alanine + UDP-N-acetyl-alpha-D-glucosamine = di-trans,octa-cis-undecaprenyl diphospho-[N-acetyl-alpha-D-glucosaminyl-(1-&gt;4)]-N-acetyl-alpha-D-muramoyl-L-alanyl-D-glutamyl-meso-2,6-diaminopimeloyl-D-alanyl-D-alanine + UDP + H(+). Its pathway is cell wall biogenesis; peptidoglycan biosynthesis. Its function is as follows. Cell wall formation. Catalyzes the transfer of a GlcNAc subunit on undecaprenyl-pyrophosphoryl-MurNAc-pentapeptide (lipid intermediate I) to form undecaprenyl-pyrophosphoryl-MurNAc-(pentapeptide)GlcNAc (lipid intermediate II). The polypeptide is UDP-N-acetylglucosamine--N-acetylmuramyl-(pentapeptide) pyrophosphoryl-undecaprenol N-acetylglucosamine transferase (Synechococcus sp. (strain CC9605)).